The sequence spans 448 residues: uncharacterized protein (448 aa).

An N6-(pyridoxal phosphate)lysine modification is found at Lys-297.

The protein belongs to the class-III pyridoxal-phosphate-dependent aminotransferase family. Pyridoxal 5'-phosphate serves as cofactor.

This is an uncharacterized protein from Sinorhizobium fredii (strain NBRC 101917 / NGR234).